Reading from the N-terminus, the 556-residue chain is Endonuclease/exonuclease/phosphatase family domain-containing protein 1 (556 aa).

The 30-residue stretch at 39 to 68 (ERLNINTATEEELMTLPGVTRQVAQNIVEY) folds into the HhH domain.

The protein is Endonuclease/exonuclease/phosphatase family domain-containing protein 1 (eepd1) of Xenopus laevis (African clawed frog).